Reading from the N-terminus, the 362-residue chain is Mitochondrial distribution and morphology protein 12 (362 aa).

One can recognise an SMP-LTD domain in the interval 1–361; sequence MSFDINWSQL…WPSWLCFDMS (361 aa). Disordered regions lie at residues 65 to 141 and 170 to 207; these read DFYE…AATP and TPSG…SKRG. 2 stretches are compositionally biased toward polar residues: residues 106 to 119 and 170 to 187; these read VTLS…TQFA and TPSG…MRTG. The segment covering 192–201 has biased composition (low complexity); the sequence is PISNTPISSS.

This sequence belongs to the MDM12 family. As to quaternary structure, component of the ER-mitochondria encounter structure (ERMES) or MDM complex, composed of MMM1, MDM10, MDM12 and MDM34. An MMM1 homodimer associates with one molecule of MDM12 on each side in a pairwise head-to-tail manner, and the SMP-LTD domains of MMM1 and MDM12 generate a continuous hydrophobic tunnel for phospholipid trafficking.

The protein localises to the mitochondrion outer membrane. Its subcellular location is the endoplasmic reticulum membrane. Component of the ERMES/MDM complex, which serves as a molecular tether to connect the endoplasmic reticulum (ER) and mitochondria. Components of this complex are involved in the control of mitochondrial shape and protein biogenesis, and function in nonvesicular lipid trafficking between the ER and mitochondria. MDM12 is required for the interaction of the ER-resident membrane protein MMM1 and the outer mitochondrial membrane-resident beta-barrel protein MDM10. The MDM12-MMM1 subcomplex functions in the major beta-barrel assembly pathway that is responsible for biogenesis of all mitochondrial outer membrane beta-barrel proteins, and acts in a late step after the SAM complex. The MDM10-MDM12-MMM1 subcomplex further acts in the TOM40-specific pathway after the action of the MDM12-MMM1 complex. Essential for establishing and maintaining the structure of mitochondria and maintenance of mtDNA nucleoids. This chain is Mitochondrial distribution and morphology protein 12, found in Meyerozyma guilliermondii (strain ATCC 6260 / CBS 566 / DSM 6381 / JCM 1539 / NBRC 10279 / NRRL Y-324) (Yeast).